The chain runs to 183 residues: Ribosome maturation factor RimM (183 aa).

A PRC barrel domain is found at 105-181 (ANEYHLMDLI…RIEIDPPLGL (77 aa)).

The protein belongs to the RimM family. Binds ribosomal protein uS19.

It is found in the cytoplasm. An accessory protein needed during the final step in the assembly of 30S ribosomal subunit, possibly for assembly of the head region. Essential for efficient processing of 16S rRNA. May be needed both before and after RbfA during the maturation of 16S rRNA. It has affinity for free ribosomal 30S subunits but not for 70S ribosomes. This Thermosynechococcus vestitus (strain NIES-2133 / IAM M-273 / BP-1) protein is Ribosome maturation factor RimM.